Here is a 65-residue protein sequence, read N- to C-terminus: Large ribosomal subunit protein bL35 (65 aa).

The protein belongs to the bacterial ribosomal protein bL35 family.

The protein is Large ribosomal subunit protein bL35 of Karelsulcia muelleri (strain GWSS) (Sulcia muelleri).